The primary structure comprises 1224 residues: uncharacterized protein (1224 aa).

Disordered stretches follow at residues 1–67 (MNQD…SSSI), 111–151 (QQSH…PPPL), 193–270 (QTEL…DPNI), 316–416 (DYNN…TVKK), 430–957 (SDSG…QEEK), and 1078–1167 (SFLP…TSHV). A compositionally biased stretch (low complexity) spans 10–48 (SFHSNNNSNSNHHHSYNNSINSGSSSSGSNNSSNNNSFN). A compositionally biased stretch (acidic residues) spans 49 to 58 (DEIEGGEIQE). Composition is skewed to low complexity over residues 126-140 (SSSSSSSSSSSSSSS), 193-212 (QTELQNKSTPSKTSSASSPP), and 228-241 (SAPTSAPTSSSVSS). Residues 242–255 (LTQPQKPKSVQYSQ) are compositionally biased toward polar residues. Residues 260–270 (EIREEKVDPNI) show a composition bias toward basic and acidic residues. Positions 316–338 (DYNNSNSNNSNNNNNNNNSITEN) are enriched in low complexity. The segment covering 341–353 (DKMINNQPSSTNS) has biased composition (polar residues). Composition is skewed to low complexity over residues 379-413 (TTTTTTTTTTSSTSEPIKSPNSSSSTNSSASTTPT) and 430-450 (SDSGTNKESNSSNSSSTTSTP). 2 stretches are compositionally biased toward basic and acidic residues: residues 451–585 (KSKD…DKKK) and 630–646 (EIDKSDKRSQKKSKVES). The span at 662-719 (TTTTTTSTSSSSSLPSLSSSSSSLPLPSSSSSSSSSSSSSSSSSSSSSSSSSSSTTST) shows a compositional bias: low complexity. Over residues 727–750 (PPPPPQQPPPPPPQQPPPPPPPIN) the composition is skewed to pro residues. Basic and acidic residues predominate over residues 755 to 892 (SEHDKKIIEK…SDRDRDRKDS (138 aa)). The span at 893–933 (NSNNNSNNNNNNNNNNNNNNNNNNNNKKDNNNNNNNNNNNN) shows a compositional bias: low complexity. Residues 948 to 957 (TPKKTKQEEK) are compositionally biased toward basic and acidic residues. The stretch at 950 to 991 (KKTKQEEKLIRSQIDQIKEDAKDLKKLAKELQSKNQNECLEM) forms a coiled coil. Low complexity-rich tracts occupy residues 1078 to 1108 (SFLPNSSSSSKSSSSSSSSSNQPANPATAPL) and 1114 to 1165 (NPSE…PNTS).

This is an uncharacterized protein from Dictyostelium discoideum (Social amoeba).